The primary structure comprises 383 residues: uncharacterized protein (383 aa).

Positions Met1 to Ile55 are disordered. Positions Pro13–Asp24 are enriched in basic and acidic residues. Over residues Ser25–Phe44 the composition is skewed to polar residues. A compositionally biased stretch (basic and acidic residues) spans Lys46–Ile55. The next 10 membrane-spanning stretches (helical) occupy residues Leu87–Asn107, Asn112–Val132, Phe157–Val177, Phe179–Leu199, Leu205–Glu225, Val228–Val248, Leu262–Leu282, Phe299–Thr319, Tyr329–Gly349, and Leu352–Leu372.

The protein belongs to the TPT transporter family.

The protein resides in the membrane. This is an uncharacterized protein from Schizosaccharomyces pombe (strain 972 / ATCC 24843) (Fission yeast).